Here is an 805-residue protein sequence, read N- to C-terminus: Arginine/serine-rich protein PNISR (805 aa).

A compositionally biased stretch (polar residues) spans 74 to 88 (PNNHGNFQGDSNFNR). Disordered regions lie at residues 74 to 331 (PNNH…EEKE) and 382 to 805 (LTGL…SRSR). Composition is skewed to pro residues over residues 100–115 (PPHP…PTPG) and 183–195 (YWQP…PAPP). The span at 197–210 (NRRERPSSFRDRQR) shows a compositional bias: basic and acidic residues. 2 positions are modified to phosphoserine: Ser-204 and Ser-211. Residue Lys-218 forms a Glycyl lysine isopeptide (Lys-Gly) (interchain with G-Cter in SUMO2) linkage. The stretch at 237 to 276 (REGLEKMEREKQKKLEKERMEQQRSQLSKKEKKATEDAEG) forms a coiled coil. Basic and acidic residues predominate over residues 238–258 (EGLEKMEREKQKKLEKERMEQ). A phosphoserine mark is found at Ser-290, Ser-304, Ser-313, and Ser-321. Residues 290-299 (SDEEEEDTEN) show a composition bias toward acidic residues. Positions 384-393 (GLGGLGGYGS) are enriched in gly residues. Basic and acidic residues predominate over residues 421–463 (QKQEAFWRKEKEQQLLHDKQMEEEKQQTERVTKEMNEFIHKEQ). A coiled-coil region spans residues 429–461 (KEKEQQLLHDKQMEEEKQQTERVTKEMNEFIHK). Phosphoserine is present on residues Ser-465 and Ser-467. 2 stretches are compositionally biased toward basic and acidic residues: residues 470-486 (EARE…KRTP) and 494-506 (EPKK…EKQG). Thr-485 carries the post-translational modification Phosphothreonine. Residue Lys-496 forms a Glycyl lysine isopeptide (Lys-Gly) (interchain with G-Cter in SUMO2) linkage. Residues 508–550 (SRSGSSSSGSSSSNSRTSSTSSTVSSSSYSSSSGSSRTSSRSS) are compositionally biased toward low complexity. Basic residues-rich tracts occupy residues 551–579 (SPKR…YSRR), 587–598 (ARVKIRDRRRSN), and 607–639 (RRNR…SRDR). The span at 659-721 (EAKEQERKKE…KRKRESERTF (63 aa)) shows a compositional bias: basic and acidic residues. Residues 673–703 (IDKDRKKKDKEREREQDKRKEKQKREEKDFK) adopt a coiled-coil conformation. Lys-703 is covalently cross-linked (Glycyl lysine isopeptide (Lys-Gly) (interchain with G-Cter in SUMO2)). Ser-726 carries the phosphoserine modification. Positions 732–753 (IRHDSRQDSKKSTTKDSKKHSG) are enriched in basic and acidic residues. Positions 754-767 (SDSSGRSSSESPGS) are enriched in low complexity. Composition is skewed to basic residues over residues 771-781 (KKAKKPKHSRS) and 789-805 (RSGK…SRSR).

This sequence belongs to the splicing factor SR family. Interacts with PNN. Expressed in heart, skeletal muscle, thymus, spleen, kidney, liver, placenta and leukocytes.

It is found in the nucleus speckle. The protein is Arginine/serine-rich protein PNISR (PNISR) of Homo sapiens (Human).